Consider the following 320-residue polypeptide: Ribosomal RNA small subunit methyltransferase H (320 aa).

S-adenosyl-L-methionine-binding positions include 36 to 38, aspartate 56, phenylalanine 82, aspartate 103, and glutamine 110; that span reads GGH.

It belongs to the methyltransferase superfamily. RsmH family.

It is found in the cytoplasm. It carries out the reaction cytidine(1402) in 16S rRNA + S-adenosyl-L-methionine = N(4)-methylcytidine(1402) in 16S rRNA + S-adenosyl-L-homocysteine + H(+). In terms of biological role, specifically methylates the N4 position of cytidine in position 1402 (C1402) of 16S rRNA. This chain is Ribosomal RNA small subunit methyltransferase H, found in Chromobacterium violaceum (strain ATCC 12472 / DSM 30191 / JCM 1249 / CCUG 213 / NBRC 12614 / NCIMB 9131 / NCTC 9757 / MK).